The primary structure comprises 292 residues: Protoheme IX farnesyltransferase (292 aa).

A run of 9 helical transmembrane segments spans residues 11–31 (FGIVVFSVLAGLAGYATGFQI), 37–57 (WKIFLETLLGIYFLSSGSLAL), 85–105 (AAAGILSVGLLLVGMNMLFKL), 108–128 (VAGWVGLFCVFLYNGPYTLWW), 133–153 (VFAAVPGAIPGALPVTIGYAV), 163–183 (SLYLFLIMFLWQMPHFWVLAI), 199–219 (VALGMEKTMFQVGLYTLVYVG), 223–243 (AAPMFVHASWMFVLLTFPFVF), and 261–281 (WLAFFMWLNVSMLVFIIIPVI).

It belongs to the UbiA prenyltransferase family. Protoheme IX farnesyltransferase subfamily.

It localises to the cell inner membrane. It carries out the reaction heme b + (2E,6E)-farnesyl diphosphate + H2O = Fe(II)-heme o + diphosphate. It participates in porphyrin-containing compound metabolism; heme O biosynthesis; heme O from protoheme: step 1/1. Its function is as follows. Converts heme B (protoheme IX) to heme O by substitution of the vinyl group on carbon 2 of heme B porphyrin ring with a hydroxyethyl farnesyl side group. This Bdellovibrio bacteriovorus (strain ATCC 15356 / DSM 50701 / NCIMB 9529 / HD100) protein is Protoheme IX farnesyltransferase.